Here is a 429-residue protein sequence, read N- to C-terminus: Small ribosomal subunit protein uS5m (429 aa).

Residues 108–127 form a disordered region; the sequence is AGAKKGRGKRTKKKKRKDLN. Residues 111-125 show a composition bias toward basic residues; it reads KKGRGKRTKKKKRKD. The S5 DRBM domain maps to 218-282; sequence FDTRILEVRN…NRAVHHLYYI (65 aa).

The protein belongs to the universal ribosomal protein uS5 family. As to quaternary structure, component of the mitochondrial ribosome small subunit (28S) which comprises a 12S rRNA and about 30 distinct proteins.

It is found in the mitochondrion. In Pongo abelii (Sumatran orangutan), this protein is Small ribosomal subunit protein uS5m (MRPS5).